A 448-amino-acid chain; its full sequence is Integrator complex subunit 15 (448 aa).

Belongs to the Integrator subunit 15 family. In terms of assembly, component of the Integrator complex, composed of core subunits INTS1, INTS2, INTS3, INTS4, INTS5, INTS6, INTS7, INTS8, INTS9/RC74, INTS10, INTS11/CPSF3L, INTS12, INTS13, INTS14 and INTS15. The core complex associates with protein phosphatase 2A subunits PPP2CA and PPP2R1A, to form the Integrator-PP2A (INTAC) complex. INTS15 is part of the tail subcomplex, composed of INTS10, INTS13, INTS14 and INTS15.

The protein resides in the nucleus. The protein localises to the chromosome. Component of the integrator complex, a multiprotein complex that terminates RNA polymerase II (Pol II) transcription in the promoter-proximal region of genes. The integrator complex provides a quality checkpoint during transcription elongation by driving premature transcription termination of transcripts that are unfavorably configured for transcriptional elongation: the complex terminates transcription by (1) catalyzing dephosphorylation of the C-terminal domain (CTD) of Pol II subunit POLR2A/RPB1 and SUPT5H/SPT5, (2) degrading the exiting nascent RNA transcript via endonuclease activity and (3) promoting the release of Pol II from bound DNA. The integrator complex is also involved in terminating the synthesis of non-coding Pol II transcripts, such as enhancer RNAs (eRNAs), small nuclear RNAs (snRNAs), telomerase RNAs and long non-coding RNAs (lncRNAs). INTS15 is part of the integrator tail module that acts as a platform for the recruitment of transcription factors at promoters. Within the integrator complex, INTS15 is required to bridge different integrator modules. This chain is Integrator complex subunit 15, found in Mus musculus (Mouse).